The chain runs to 155 residues: Ribosome maturation factor RimP (155 aa).

Belongs to the RimP family.

It localises to the cytoplasm. Its function is as follows. Required for maturation of 30S ribosomal subunits. This Maridesulfovibrio salexigens (strain ATCC 14822 / DSM 2638 / NCIMB 8403 / VKM B-1763) (Desulfovibrio salexigens) protein is Ribosome maturation factor RimP.